The chain runs to 327 residues: Beta-ketoacyl-[acyl-carrier-protein] synthase III (327 aa).

Active-site residues include Cys114 and His254. Residues 255 to 259 form an ACP-binding region; the sequence is QANRR. Asn284 is a catalytic residue.

Belongs to the thiolase-like superfamily. FabH family. In terms of assembly, homodimer.

It localises to the cytoplasm. The catalysed reaction is malonyl-[ACP] + acetyl-CoA + H(+) = 3-oxobutanoyl-[ACP] + CO2 + CoA. It functions in the pathway lipid metabolism; fatty acid biosynthesis. Its function is as follows. Catalyzes the condensation reaction of fatty acid synthesis by the addition to an acyl acceptor of two carbons from malonyl-ACP. Catalyzes the first condensation reaction which initiates fatty acid synthesis and may therefore play a role in governing the total rate of fatty acid production. Possesses both acetoacetyl-ACP synthase and acetyl transacylase activities. Its substrate specificity determines the biosynthesis of branched-chain and/or straight-chain of fatty acids. This Lactobacillus helveticus (strain DPC 4571) protein is Beta-ketoacyl-[acyl-carrier-protein] synthase III.